Reading from the N-terminus, the 340-residue chain is Erythroferrone (340 aa).

The first 24 residues, 1–24 (MASTRRPVGARTLLACASLLAAMG), serve as a signal peptide directing secretion. 3 disordered regions span residues 30-63 (SAEP…IAHA), 79-112 (SDKG…GPPG), and 141-161 (HCTR…PAAQ). Over residues 40–58 (PQPPGAELPAPPANSPPEP) the composition is skewed to pro residues. The segment covering 84 to 95 (NSKRRSKARRLK) has biased composition (basic residues). Hydroxyproline occurs at positions 99, 101, 102, 104, 105, and 107. Pro residues predominate over residues 99-112 (PGPPGPPGPQGPPG). Residues 145–154 (DLTTPASGSP) are compositionally biased toward polar residues. A C1q domain is found at 185 to 340 (APRVEAAFHC…SHFSAILLGL (156 aa)). Residues Asn-229, Asn-281, Asn-292, and Asn-319 are each glycosylated (N-linked (GlcNAc...) asparagine).

It belongs to the adipolin/erythroferrone family. Homodimer; disulfide-linked. Forms trimer, hexamers and higher molecular weight oligomers. May form heteromeric complexes with C1QTNF2 and C1QTNF12 and, to a lesser extent, with C1QTNF5 and C1QTNF10. Interacts with BMP5 and BMP7; the interaction inhibits BMP-induced transcription of HAMP. Interacts with BMP6; the interaction inhibits BMP-induced transcription of HAMP. Interacts with BMP2. Interacts with heterodimers composed of BMP2 and BMP6 in vitro, the interaction inhibits the heterodimer binding to its receptor BMPR1A /ALK3 and thereby suppresses expression of HAMP. Post-translationally, N-glycosylated; required for secretion of the mature protein. As to expression, expressed in the soleus muscle in the leg (at protein level). Found in blood (at protein level). Weakly expressed in the heart (at protein level). Predominantly expressed in skeletal muscle and, at much lower levels, in other tissues, including lung, eye, smooth muscle, brain and kidney. Within skeletal muscles, higher expression levels in soleus as compared with plantaris. Expressed in osteoblasts, mature osteoclasts and erythroblasts. When fasting, females tend to have higher circulating levels than males. Obese mice tend to have lower expression and circulating levels as compared to lean animals. Following EPO treatment, only expressed in bone marrow and spleen.

It is found in the secreted. Functionally, iron-regulatory hormone that acts as an erythroid regulator after hemorrhage: produced by erythroblasts following blood loss and mediates suppression of hepcidin (HAMP) expression in the liver, thereby promoting increased iron absorption and mobilization from stores. Promotes lipid uptake into adipocytes and hepatocytes via transcriptional up-regulation of genes involved in fatty acid uptake. Inhibits apoptosis and inflammatory response in cardiomyocytes via promotion of sphingosine-1-phosphate (S1P) and cAMP-dependent activation of AKT signaling. Inhibits autophagy induced by nutrient deficiency in hepatocytes via promoting the phosphorylation of IRS1, AKT, and MTOR, and thereby subsequent activation of the AKT-MTOR signaling pathway. Negatively regulates the differentiation of osteoblasts, potentially via sequestering BMP2, and thereby inhibits the activation of SMAD signaling. The reduction in BMP2 signaling in osteoblasts also results in an increase in expression of the osteoclastogenesis-promoting factors TNFSF11/RANKL and SOST, thereby indirectly promotes bone resorption. This is Erythroferrone from Mus musculus (Mouse).